Here is a 117-residue protein sequence, read N- to C-terminus: 5-hydroxyisourate hydrolase (117 aa).

Substrate contacts are provided by histidine 7, arginine 45, and tyrosine 114.

It belongs to the transthyretin family. 5-hydroxyisourate hydrolase subfamily. In terms of assembly, homotetramer.

The enzyme catalyses 5-hydroxyisourate + H2O = 5-hydroxy-2-oxo-4-ureido-2,5-dihydro-1H-imidazole-5-carboxylate + H(+). In terms of biological role, catalyzes the hydrolysis of 5-hydroxyisourate (HIU) to 2-oxo-4-hydroxy-4-carboxy-5-ureidoimidazoline (OHCU). The sequence is that of 5-hydroxyisourate hydrolase from Ralstonia nicotianae (strain ATCC BAA-1114 / GMI1000) (Ralstonia solanacearum).